Consider the following 388-residue polypeptide: Chorismate synthase (388 aa).

NADP(+) is bound by residues Arg-39 and Arg-45. FMN contacts are provided by residues 132-134 (RSS), 251-252 (NA), Gly-296, 311-315 (KPIPT), and Arg-337.

This sequence belongs to the chorismate synthase family. As to quaternary structure, homotetramer. Requires FMNH2 as cofactor.

The catalysed reaction is 5-O-(1-carboxyvinyl)-3-phosphoshikimate = chorismate + phosphate. The protein operates within metabolic intermediate biosynthesis; chorismate biosynthesis; chorismate from D-erythrose 4-phosphate and phosphoenolpyruvate: step 7/7. Functionally, catalyzes the anti-1,4-elimination of the C-3 phosphate and the C-6 proR hydrogen from 5-enolpyruvylshikimate-3-phosphate (EPSP) to yield chorismate, which is the branch point compound that serves as the starting substrate for the three terminal pathways of aromatic amino acid biosynthesis. This reaction introduces a second double bond into the aromatic ring system. This chain is Chorismate synthase, found in Staphylococcus aureus (strain MRSA252).